Consider the following 94-residue polypeptide: Small ubiquitin-related modifier 3 (94 aa).

Lys11 participates in a covalent cross-link: Glycyl lysine isopeptide (Lys-Gly) (interchain with G-Cter in SUMO). The region spanning 15–92 (DHINLKVAGQ…IDVFQQQTGG (78 aa)) is the Ubiquitin-like domain. Residue Gly92 forms a Glycyl lysine isopeptide (Gly-Lys) (interchain with K-? in acceptor proteins) linkage. The propeptide occupies 93-94 (VC).

The protein belongs to the ubiquitin family. SUMO subfamily. Interacts with sae2 and ube2i. Covalently attached to a number of proteins. In terms of processing, polymeric chains can be formed through Lys-11 cross-linking. Cleavage of precursor form by a sentrin-specific protease is necessary for function.

The protein resides in the cytoplasm. It localises to the nucleus. Its subcellular location is the PML body. Functionally, ubiquitin-like protein which can be covalently attached to target lysines either as a monomer or as a lysine-linked polymer. Does not seem to be involved in protein degradation and may function as an antagonist of ubiquitin in the degradation process. Plays a role in a number of cellular processes such as nuclear transport, DNA replication and repair, mitosis and signal transduction. Covalent attachment to its substrates requires prior activation by the E1 complex sae1-sae2 and linkage to the E2 enzyme ube2i. The sequence is that of Small ubiquitin-related modifier 3 (sumo3) from Xenopus laevis (African clawed frog).